A 219-amino-acid polypeptide reads, in one-letter code: Small ribosomal subunit protein uS3c (219 aa).

Positions 43–120 (IQNYIQKNMQ…KINITITKIT (78 aa)) constitute a KH type-2 domain.

The protein belongs to the universal ribosomal protein uS3 family. As to quaternary structure, part of the 30S ribosomal subunit.

Its subcellular location is the plastid. It localises to the chloroplast. The protein is Small ribosomal subunit protein uS3c (rps3) of Oenothera elata subsp. hookeri (Hooker's evening primrose).